Reading from the N-terminus, the 238-residue chain is Sugar fermentation stimulation protein homolog (238 aa).

The protein belongs to the SfsA family.

The protein is Sugar fermentation stimulation protein homolog of Vibrio parahaemolyticus serotype O3:K6 (strain RIMD 2210633).